We begin with the raw amino-acid sequence, 1033 residues long: Calcium-transporting ATPase 3, plasma membrane-type (1033 aa).

The Cytoplasmic segment spans residues 1–180 (MHSGVNGCCP…FVWEALEDTT (180 aa)). 2 consecutive transmembrane segments (helical) span residues 181-201 (LIILSACAIFSLVVGITTEGW) and 204-224 (GAHDGVGIVASILLVVSVTGT). The Cytoplasmic portion of the chain corresponds to 225-268 (SNYQQSLQFRDLDKEKRKILVQVTRNGLRQRVLIDDLLPGDAVH). A run of 2 helical transmembrane segments spans residues 269 to 289 (LAVGDQVPADGLFISGFSVLV) and 362 to 382 (IGKIGLFFAVLTFIVLSQGII). Over 383-405 (GQKYLDGLLLSWSGDDVLEILDH) the chain is Cytoplasmic. Residues 406-426 (FAVAVTIVVVAVPEGLPLAVT) form a helical membrane-spanning segment. Aspartate 461 functions as the 4-aspartylphosphate intermediate in the catalytic mechanism. Aspartate 762 and aspartate 766 together coordinate Mg(2+). A helical membrane pass occupies residues 823-843 (FQLTVNVVALLVNFTSACFTG). At 844 to 846 (DAP) the chain is on the cytoplasmic side. 2 helical membrane-spanning segments follow: residues 847–867 (LTAVQLLWVNMIMDTLGALAL) and 928–948 (IVLNTIIFNTFVFCQVFNEIS). Residues 949–965 (SREMEDINVLRGMAGNS) are Cytoplasmic-facing. Transmembrane regions (helical) follow at residues 966-986 (IFLGVLTGTIFFQFILVQFLG) and 999-1019 (WLISILFGFLGMPIAAAIKLI). The Cytoplasmic segment spans residues 1020-1033 (AVEPHEKADTRRTP).

It belongs to the cation transport ATPase (P-type) (TC 3.A.3) family. Type IIB subfamily.

It is found in the membrane. It carries out the reaction Ca(2+)(in) + ATP + H2O = Ca(2+)(out) + ADP + phosphate + H(+). With respect to regulation, activated by calmodulin. This magnesium-dependent enzyme catalyzes the hydrolysis of ATP coupled with the translocation of calcium from the cytosol out of the cell, into the endoplasmic reticulum, or into organelles. The chain is Calcium-transporting ATPase 3, plasma membrane-type from Oryza sativa subsp. japonica (Rice).